The chain runs to 246 residues: 5-oxoprolinase subunit A (246 aa).

The protein belongs to the LamB/PxpA family. As to quaternary structure, forms a complex composed of PxpA, PxpB and PxpC.

The catalysed reaction is 5-oxo-L-proline + ATP + 2 H2O = L-glutamate + ADP + phosphate + H(+). Catalyzes the cleavage of 5-oxoproline to form L-glutamate coupled to the hydrolysis of ATP to ADP and inorganic phosphate. This is 5-oxoprolinase subunit A from Cupriavidus necator (strain ATCC 17699 / DSM 428 / KCTC 22496 / NCIMB 10442 / H16 / Stanier 337) (Ralstonia eutropha).